The following is a 322-amino-acid chain: Cytochrome f (322 aa).

The N-terminal stretch at 1 to 36 (MQKNRNTFSWVKEQMTRCISVSMMIYVITRASISNA) is a signal peptide. Residues Y37, C57, C60, and H61 each contribute to the heme site. A helical transmembrane segment spans residues 288-308 (IQGLLFFLASVILAQIFLVLK).

This sequence belongs to the cytochrome f family. In terms of assembly, the 4 large subunits of the cytochrome b6-f complex are cytochrome b6, subunit IV (17 kDa polypeptide, petD), cytochrome f and the Rieske protein, while the 4 small subunits are PetG, PetL, PetM and PetN. The complex functions as a dimer. The cofactor is heme.

It is found in the plastid. The protein localises to the chloroplast thylakoid membrane. Its function is as follows. Component of the cytochrome b6-f complex, which mediates electron transfer between photosystem II (PSII) and photosystem I (PSI), cyclic electron flow around PSI, and state transitions. The protein is Cytochrome f of Nymphaea alba (White water-lily).